Here is a 175-residue protein sequence, read N- to C-terminus: T-cell surface glycoprotein CD3 epsilon chain (175 aa).

Positions 1-21 (MRCEVPLPLLGLLLCVVGAAA) are cleaved as a signal peptide. The Extracellular segment spans residues 22-100 (QGGQEEFAVE…VCANCEELDT (79 aa)). The chain crosses the membrane as a helical span at residues 101–121 (FTVVGIIAADLLITLGVLILV). The Cytoplasmic segment spans residues 122–175 (YYFSKNKKGQSRAAAGSRPRAQKMRRPPPVPNPDYEPIRKGQRDVYAGLEHRGF). The segment at 133-163 (RAAAGSRPRAQKMRRPPPVPNPDYEPIRKGQ) is disordered. The ITAM domain occupies 146 to 173 (RRPPPVPNPDYEPIRKGQRDVYAGLEHR).

The TCR/CD3 complex of T-lymphocytes consists of either a TCR alpha/beta or TCR gamma/delta heterodimer coexpressed at the cell surface with the invariant subunits of CD3 labeled gamma, delta, epsilon, zeta, and eta.

Its subcellular location is the cell membrane. Its function is as follows. The CD3 complex mediates signal transduction, resulting in T-cell activation and proliferation. Required for normal immune responses. The chain is T-cell surface glycoprotein CD3 epsilon chain (CD3E) from Gallus gallus (Chicken).